The primary structure comprises 1574 residues: Centrosomal protein of 170 kDa protein B (1574 aa).

The FHA domain occupies 23-73 (IFVGRDECELMLQSRSVDKQHAVINYDQDRDEHWVKDLGSLNGTFVNDVRI). Disordered stretches follow at residues 121–258 (VSVK…GVGG), 316–395 (DWLV…RDPQ), and 409–578 (FDGD…QDQE). Composition is skewed to basic and acidic residues over residues 147–157 (RPEKGDRRHGA), 182–197 (SEDR…RPKD), and 325–344 (LLRR…DLPV). Serine 360 is modified (phosphoserine). Positions 370-382 (ASVSGASAEASGE) are enriched in low complexity. A Phosphoserine modification is found at serine 421. Positions 430–446 (PKADKRRGPGTSDRDRP) are enriched in basic and acidic residues. Polar residues predominate over residues 452 to 463 (ATGSSSGPQRAS). Over residues 465-474 (LKREKTEERL) the composition is skewed to basic and acidic residues. Residues 475–488 (GNTSPVPRASTRSF) show a composition bias toward polar residues. A phosphoserine mark is found at serine 478 and serine 490. The span at 518–528 (EKTPPVLPAPL) shows a compositional bias: pro residues. Serine 534 carries the phosphoserine modification. Threonine 540 and threonine 541 each carry phosphothreonine. Phosphoserine is present on residues serine 595, serine 617, serine 653, serine 709, serine 744, serine 746, serine 749, serine 751, serine 819, and serine 843. 6 disordered regions span residues 637-826 (PGMA…RDGL), 839-882 (RSGR…HISS), 924-1300 (SKSA…DPYG), 1333-1358 (AGDG…NTPA), 1377-1407 (NFQK…TNKT), and 1510-1535 (NRAP…TSPA). Residues 857 to 867 (FARQESFTKEP) show a composition bias toward polar residues. Serine 947 carries the post-translational modification Phosphoserine. Residues 950-959 (DTASTISLLS) show a composition bias toward polar residues. 2 positions are modified to phosphoserine: serine 965 and serine 981. Residues 996-1005 (ARERMSERQH) are compositionally biased toward basic and acidic residues. Residues 1084 to 1102 (RSSATAQKVQQALTRSNSL) show a composition bias toward polar residues. Serine 1122 is subject to Phosphoserine. Low complexity predominate over residues 1134–1146 (AANPEPANRAAPE). Phosphoserine is present on residues serine 1166 and serine 1186. A compositionally biased stretch (low complexity) spans 1199–1213 (AEARAAAKKAAATAA). Residues 1265-1282 (HASTATQTPRGSSSTRAR) show a composition bias toward polar residues. Position 1289 is a phosphothreonine (threonine 1289). At serine 1341 the chain carries Phosphoserine. Composition is skewed to polar residues over residues 1344–1358 (PTRS…NTPA) and 1385–1396 (SMNSHNLDQNMN). A Phosphothreonine modification is found at threonine 1345. Serine 1347 is subject to Phosphoserine. 2 positions are modified to phosphoserine: serine 1530 and serine 1533.

Belongs to the CEP170 family.

The protein localises to the cytoplasm. It localises to the cytoskeleton. Its function is as follows. Plays a role in microtubule organization. The sequence is that of Centrosomal protein of 170 kDa protein B (Cep170b) from Mus musculus (Mouse).